Reading from the N-terminus, the 414-residue chain is MANSC domain-containing protein 1 (414 aa).

A signal peptide spans 1–24; the sequence is MLFRGTSLAYSLLVISFLTPRSSA. Over 25 to 369 the chain is Extracellular; that stretch reads GQNCLTKSLE…HGLSFEKWLL (345 aa). The region spanning 32-116 is the MANSC domain; that stretch reads SLEDVVIDIQ…LKPAKGLVTY (85 aa). N128, N234, and N335 each carry an N-linked (GlcNAc...) asparagine glycan. Residues 311 to 339 form a disordered region; it reads FQGGSTLTSDPRHGKSSTSESSITNKTAS. Residues 326 to 338 show a composition bias toward polar residues; the sequence is SSTSESSITNKTA. A helical transmembrane segment spans residues 370-392; sequence IGTLLCGVLFLVIGLVLLGRMLV. Topologically, residues 393–414 are cytoplasmic; the sequence is EALRRKRYSRLDYLINGIYVDI.

It is found in the membrane. This is MANSC domain-containing protein 1 (Mansc1) from Mus musculus (Mouse).